The primary structure comprises 486 residues: MAEEYKEALLEKQNYHDGCPGCKVEQMKQLRRGYPYLELSFVWIIVLSTSLPISSLYPFLYYMIEDFGVAKTEKDIGFYAGFVGCSFMLGRALTSVFWGIVADRYGRKPIILLGTISIAIFNALFGLSSNFWMAIGTRFLLGSFNCLLGTMKAYASEIFRDEYQATAMSAVSTAWGIGLIIGPALGGFLAQPADKYPNVFSQESLFGRFRYALPCFTISAFALLVTVLCCFIPETLHNHKLDSLSHDDSYDILEAASHESSPSTGKAGKNERKASQSLLKNWPLMSSIIVYCVLCLHDTAYSEIFALWANSPRKYGGLSYSTNEVGTVLAISGLGLFSFQVFVYPLAEKLLGPVLVTRYAGALMIPIQMSYPFIAGLSGLSLSLMLNCASILINVLSVSAITGLLILQNRAVDQSQRGAANGIAMTAMSLFKTVGPAGAGILFSWSERRLNAAFLPGSHMVFFVLNVIVVVGVALTFKPFLTTSRR.

The next 12 membrane-spanning stretches (helical) occupy residues 41 to 61 (FVWI…PFLY), 82 to 102 (FVGC…GIVA), 109 to 129 (PIIL…GLSS), 131 to 151 (FWMA…LGTM), 170 to 190 (AVST…GFLA), 212 to 232 (ALPC…CCFI), 288 to 308 (IIVY…FALW), 327 to 347 (TVLA…YPLA), 362 to 384 (ALMI…SLSL), 391 to 408 (ILIN…LILQ), 423 to 443 (IAMT…GILF), and 461 to 481 (VFFV…KPFL).

This sequence belongs to the major facilitator superfamily. In terms of tissue distribution, strongly expressed in developing leaves, differentiating zones of root tips and sepals of developing flowers. Restricted to vascular tissues in older leaves, mature roots, flowers, anthers and filaments. Not expressed in developing anthers.

It is found in the vacuole membrane. Its function is as follows. Major facilitator superfamily (MFS) transporter involved in zinc tolerance by participating in vacuolar sequestration of zinc. The protein is Protein ZINC INDUCED FACILITATOR 1 (ZIF1) of Arabidopsis thaliana (Mouse-ear cress).